The chain runs to 412 residues: [Pyruvate dehydrogenase (acetyl-transferring)] kinase isozyme 4, mitochondrial (412 aa).

Residues 138 to 368 (IIEYKDSCTV…DAIIYLKALS (231 aa)) enclose the Histidine kinase domain. ATP contacts are provided by residues 254-261 (ELFKNAMR), Asp293, 312-313 (ST), and 329-334 (GFGYGL).

It belongs to the PDK/BCKDK protein kinase family. In terms of assembly, homodimer. Interacts with the pyruvate dehydrogenase complex subunit DLAT, and is part of the multimeric pyruvate dehydrogenase complex that contains multiple copies of pyruvate dehydrogenase (E1), dihydrolipoamide acetyltransferase (DLAT, E2) and lipoamide dehydrogenase (DLD, E3). Detected in heart, white adipose tissue and muscle.

It is found in the mitochondrion matrix. The catalysed reaction is L-seryl-[pyruvate dehydrogenase E1 alpha subunit] + ATP = O-phospho-L-seryl-[pyruvate dehydrogenase E1 alpha subunit] + ADP + H(+). Kinase that plays a key role in regulation of glucose and fatty acid metabolism and homeostasis via phosphorylation of the pyruvate dehydrogenase subunits PDHA1 and PDHA2. This inhibits pyruvate dehydrogenase activity, and thereby regulates metabolite flux through the tricarboxylic acid cycle, down-regulates aerobic respiration and inhibits the formation of acetyl-coenzyme A from pyruvate. Inhibition of pyruvate dehydrogenase decreases glucose utilization and increases fat metabolism in response to prolonged fasting and starvation. Plays an important role in maintaining normal blood glucose levels under starvation, and is involved in the insulin signaling cascade. Via its regulation of pyruvate dehydrogenase activity, plays an important role in maintaining normal blood pH and in preventing the accumulation of ketone bodies under starvation. In the fed state, mediates cellular responses to glucose levels and to a high-fat diet. Regulates both fatty acid oxidation and de novo fatty acid biosynthesis. Plays a role in the generation of reactive oxygen species. Protects detached epithelial cells against anoikis. Plays a role in cell proliferation via its role in regulating carbohydrate and fatty acid metabolism. This is [Pyruvate dehydrogenase (acetyl-transferring)] kinase isozyme 4, mitochondrial (PDK4) from Rhinolophus ferrumequinum (Greater horseshoe bat).